A 75-amino-acid polypeptide reads, in one-letter code: Exodeoxyribonuclease 7 small subunit (75 aa).

This sequence belongs to the XseB family. Heterooligomer composed of large and small subunits.

The protein resides in the cytoplasm. It catalyses the reaction Exonucleolytic cleavage in either 5'- to 3'- or 3'- to 5'-direction to yield nucleoside 5'-phosphates.. Its function is as follows. Bidirectionally degrades single-stranded DNA into large acid-insoluble oligonucleotides, which are then degraded further into small acid-soluble oligonucleotides. The chain is Exodeoxyribonuclease 7 small subunit from Pelobacter propionicus (strain DSM 2379 / NBRC 103807 / OttBd1).